We begin with the raw amino-acid sequence, 735 residues long: 1,4-alpha-glucan branching enzyme GlgB 1 (735 aa).

The active-site Nucleophile is Asp-418. Glu-471 acts as the Proton donor in catalysis.

Belongs to the glycosyl hydrolase 13 family. GlgB subfamily. Monomer.

The enzyme catalyses Transfers a segment of a (1-&gt;4)-alpha-D-glucan chain to a primary hydroxy group in a similar glucan chain.. It participates in glycan biosynthesis; glycogen biosynthesis. Functionally, catalyzes the formation of the alpha-1,6-glucosidic linkages in glycogen by scission of a 1,4-alpha-linked oligosaccharide from growing alpha-1,4-glucan chains and the subsequent attachment of the oligosaccharide to the alpha-1,6 position. In Rhizobium etli (strain ATCC 51251 / DSM 11541 / JCM 21823 / NBRC 15573 / CFN 42), this protein is 1,4-alpha-glucan branching enzyme GlgB 1.